A 540-amino-acid polypeptide reads, in one-letter code: UDP-N-acetylmuramyl-tripeptide synthetase (540 aa).

S33 is a binding site for UDP-N-acetyl-alpha-D-muramoyl-L-alanyl-D-glutamate. 114-120 (GTEGKSS) provides a ligand contact to ATP. Residues 158–159 (TT), S185, and R195 contribute to the UDP-N-acetyl-alpha-D-muramoyl-L-alanyl-D-glutamate site. At K227 the chain carries N6-carboxylysine.

This sequence belongs to the MurCDEF family. MurE subfamily. Post-translationally, carboxylation is probably crucial for Mg(2+) binding and, consequently, for the gamma-phosphate positioning of ATP.

The protein resides in the cytoplasm. It functions in the pathway cell wall biogenesis; peptidoglycan biosynthesis. Functionally, catalyzes the addition of an amino acid to the nucleotide precursor UDP-N-acetylmuramoyl-L-alanyl-D-glutamate (UMAG) in the biosynthesis of bacterial cell-wall peptidoglycan. The polypeptide is UDP-N-acetylmuramyl-tripeptide synthetase (Treponema pallidum (strain Nichols)).